Reading from the N-terminus, the 280-residue chain is Lipase chaperone (280 aa).

The chain crosses the membrane as a helical span at residues 5–22; that stretch reads ALTIITIALGSLGAVYFL.

It belongs to the lipase chaperone family.

It is found in the cell inner membrane. Its function is as follows. May be involved in the folding of the extracellular lipase during its passage through the periplasm. The polypeptide is Lipase chaperone (lifO) (Vibrio vulnificus (strain CMCP6)).